Reading from the N-terminus, the 220-residue chain is Ribose-5-phosphate isomerase A (220 aa).

Residues 28 to 31, 81 to 84, and 94 to 97 contribute to the substrate site; these read TGST, DGAD, and KGGG. The active-site Proton acceptor is the Glu103. Lys121 is a substrate binding site.

It belongs to the ribose 5-phosphate isomerase family. Homodimer.

The catalysed reaction is aldehydo-D-ribose 5-phosphate = D-ribulose 5-phosphate. Its pathway is carbohydrate degradation; pentose phosphate pathway; D-ribose 5-phosphate from D-ribulose 5-phosphate (non-oxidative stage): step 1/1. Functionally, catalyzes the reversible conversion of ribose-5-phosphate to ribulose 5-phosphate. The polypeptide is Ribose-5-phosphate isomerase A (Yersinia enterocolitica serotype O:8 / biotype 1B (strain NCTC 13174 / 8081)).